The chain runs to 312 residues: Glyoxylate/hydroxypyruvate reductase A (312 aa).

Arg-227 is an active-site residue. The active-site Proton donor is the His-275.

This sequence belongs to the D-isomer specific 2-hydroxyacid dehydrogenase family. GhrA subfamily.

It localises to the cytoplasm. It carries out the reaction glycolate + NADP(+) = glyoxylate + NADPH + H(+). The catalysed reaction is (R)-glycerate + NAD(+) = 3-hydroxypyruvate + NADH + H(+). The enzyme catalyses (R)-glycerate + NADP(+) = 3-hydroxypyruvate + NADPH + H(+). Functionally, catalyzes the NADPH-dependent reduction of glyoxylate and hydroxypyruvate into glycolate and glycerate, respectively. The polypeptide is Glyoxylate/hydroxypyruvate reductase A (Salmonella paratyphi C (strain RKS4594)).